The sequence spans 230 residues: Ribose-5-phosphate isomerase A (230 aa).

Residues 29-32, 86-89, and 99-102 contribute to the substrate site; these read SGST, DGAD, and KGGG. Residue E108 is the Proton acceptor of the active site. A substrate-binding site is contributed by K126.

Belongs to the ribose 5-phosphate isomerase family. As to quaternary structure, homodimer.

The enzyme catalyses aldehydo-D-ribose 5-phosphate = D-ribulose 5-phosphate. The protein operates within carbohydrate degradation; pentose phosphate pathway; D-ribose 5-phosphate from D-ribulose 5-phosphate (non-oxidative stage): step 1/1. Functionally, catalyzes the reversible conversion of ribose-5-phosphate to ribulose 5-phosphate. The sequence is that of Ribose-5-phosphate isomerase A from Desulfatibacillum aliphaticivorans.